A 206-amino-acid chain; its full sequence is Putative archaetidylserine decarboxylase proenzyme (206 aa).

Ser172 (schiff-base intermediate with substrate; via pyruvic acid) is an active-site residue. Ser172 bears the Pyruvic acid (Ser); by autocatalysis mark.

The protein belongs to the phosphatidylserine decarboxylase family. PSD-A subfamily. In terms of assembly, heterodimer of a large membrane-associated beta subunit and a small pyruvoyl-containing alpha subunit. Pyruvate serves as cofactor. In terms of processing, is synthesized initially as an inactive proenzyme. Formation of the active enzyme involves a self-maturation process in which the active site pyruvoyl group is generated from an internal serine residue via an autocatalytic post-translational modification. Two non-identical subunits are generated from the proenzyme in this reaction, and the pyruvate is formed at the N-terminus of the alpha chain, which is derived from the carboxyl end of the proenzyme. The post-translation cleavage follows an unusual pathway, termed non-hydrolytic serinolysis, in which the side chain hydroxyl group of the serine supplies its oxygen atom to form the C-terminus of the beta chain, while the remainder of the serine residue undergoes an oxidative deamination to produce ammonia and the pyruvoyl prosthetic group on the alpha chain.

The protein resides in the cell membrane. The enzyme catalyses archaetidylserine + H(+) = archaetidylethanolamine + CO2. In terms of biological role, catalyzes the formation of archaetidylethanolamine (PtdEtn) from archaetidylserine (PtdSer). This chain is Putative archaetidylserine decarboxylase proenzyme, found in Methanocaldococcus jannaschii (strain ATCC 43067 / DSM 2661 / JAL-1 / JCM 10045 / NBRC 100440) (Methanococcus jannaschii).